The sequence spans 221 residues: Adenylate kinase (221 aa).

An ATP-binding site is contributed by 10 to 15; sequence GAGKGT. An NMP region spans residues 30 to 59; that stretch reads STGDMLRAAVKAGTEFGVAAKKIMDAGGLV. AMP is bound by residues T31, R36, 57–59, 85–88, and Q92; these read GLV and GFPR. The interval 122–159 is LID; that stretch reads GRRVHPASGRTYHIKYNPPKVEGKDDVTGDALIQRDDD. Residues R123 and 132-133 contribute to the ATP site; that span reads TY. AMP-binding residues include R156 and R167. G207 contributes to the ATP binding site.

Belongs to the adenylate kinase family. In terms of assembly, monomer.

It localises to the cytoplasm. It catalyses the reaction AMP + ATP = 2 ADP. It participates in purine metabolism; AMP biosynthesis via salvage pathway; AMP from ADP: step 1/1. Catalyzes the reversible transfer of the terminal phosphate group between ATP and AMP. Plays an important role in cellular energy homeostasis and in adenine nucleotide metabolism. In Polynucleobacter asymbioticus (strain DSM 18221 / CIP 109841 / QLW-P1DMWA-1) (Polynucleobacter necessarius subsp. asymbioticus), this protein is Adenylate kinase.